The primary structure comprises 118 residues: Acidic elicitin A1 (118 aa).

Positions 1 to 20 (MNFRALFAATVAALVGSTSA) are cleaved as a signal peptide. 3 cysteine pairs are disulfide-bonded: Cys-23/Cys-91, Cys-47/Cys-76, and Cys-71/Cys-115.

It belongs to the elicitin family.

It is found in the secreted. In terms of biological role, induces local and distal defense responses (incompatible hypersensitive reaction) in plants from the solanaceae and cruciferae families. Elicits leaf necrosis and causes the accumulation of pathogenesis-related proteins. Might interact with the lipidic molecules of the plasma membrane. In Phytophthora cryptogea, this protein is Acidic elicitin A1 (B14).